The chain runs to 927 residues: Translation initiation factor IF-2 (927 aa).

The segment at Leu27 to Phe338 is disordered. A compositionally biased stretch (polar residues) spans Ser49–Lys69. 2 stretches are compositionally biased toward basic and acidic residues: residues Thr70 to Pro86 and Phe101 to His138. The span at Gly146–Arg159 shows a compositional bias: low complexity. Basic and acidic residues-rich tracts occupy residues Asn160–Gln171, Tyr202–Leu226, and Ala234–Val257. The span at Asn300–Asn316 shows a compositional bias: low complexity. A tr-type G domain is found at Glu428 to Lys597. Residues Gly437–Thr444 form a G1 region. Gly437–Thr444 contributes to the GTP binding site. Positions Gly462–His466 are G2. A G3 region spans residues Asp483–Gly486. GTP is bound by residues Asp483–His487 and Asn537–Asp540. The interval Asn537 to Asp540 is G4. The tract at residues Ser573 to Lys575 is G5.

It belongs to the TRAFAC class translation factor GTPase superfamily. Classic translation factor GTPase family. IF-2 subfamily.

Its subcellular location is the cytoplasm. Functionally, one of the essential components for the initiation of protein synthesis. Protects formylmethionyl-tRNA from spontaneous hydrolysis and promotes its binding to the 30S ribosomal subunits. Also involved in the hydrolysis of GTP during the formation of the 70S ribosomal complex. In Streptococcus agalactiae serotype Ia (strain ATCC 27591 / A909 / CDC SS700), this protein is Translation initiation factor IF-2.